We begin with the raw amino-acid sequence, 179 residues long: NAD(P)H-quinone oxidoreductase subunit I, chloroplastic (179 aa).

2 consecutive 4Fe-4S ferredoxin-type domains span residues 55 to 84 (GRIH…VDWR) and 95 to 124 (LNYS…MTEE). [4Fe-4S] cluster-binding residues include C64, C67, C70, C74, C104, C107, C110, and C114.

This sequence belongs to the complex I 23 kDa subunit family. As to quaternary structure, NDH is composed of at least 16 different subunits, 5 of which are encoded in the nucleus. It depends on [4Fe-4S] cluster as a cofactor.

It is found in the plastid. Its subcellular location is the chloroplast thylakoid membrane. It catalyses the reaction a plastoquinone + NADH + (n+1) H(+)(in) = a plastoquinol + NAD(+) + n H(+)(out). It carries out the reaction a plastoquinone + NADPH + (n+1) H(+)(in) = a plastoquinol + NADP(+) + n H(+)(out). In terms of biological role, NDH shuttles electrons from NAD(P)H:plastoquinone, via FMN and iron-sulfur (Fe-S) centers, to quinones in the photosynthetic chain and possibly in a chloroplast respiratory chain. The immediate electron acceptor for the enzyme in this species is believed to be plastoquinone. Couples the redox reaction to proton translocation, and thus conserves the redox energy in a proton gradient. The chain is NAD(P)H-quinone oxidoreductase subunit I, chloroplastic from Nymphaea alba (White water-lily).